Reading from the N-terminus, the 1270-residue chain is DNA-directed RNA polymerase subunit beta (1270 aa).

This sequence belongs to the RNA polymerase beta chain family. In terms of assembly, the RNAP catalytic core consists of 2 alpha, 1 beta, 1 beta' and 1 omega subunit. When a sigma factor is associated with the core the holoenzyme is formed, which can initiate transcription.

The catalysed reaction is RNA(n) + a ribonucleoside 5'-triphosphate = RNA(n+1) + diphosphate. DNA-dependent RNA polymerase catalyzes the transcription of DNA into RNA using the four ribonucleoside triphosphates as substrates. This is DNA-directed RNA polymerase subunit beta from Porphyromonas cangingivalis.